The following is a 190-amino-acid chain: dCTP deaminase, dUMP-forming (190 aa).

DCTP-binding positions include 101 to 106, Asp-119, 127 to 129, Gln-148, Tyr-162, and Gln-174; these read KSSLGR and TLE. Glu-129 serves as the catalytic Proton donor/acceptor. Residues 161–190 are disordered; that stretch reads PYGSSSVGSKYQGQRGPTPSRSYQNFVKND. Over residues 163–190 the composition is skewed to polar residues; sequence GSSSVGSKYQGQRGPTPSRSYQNFVKND.

The protein belongs to the dCTP deaminase family. In terms of assembly, homotrimer.

The enzyme catalyses dCTP + 2 H2O = dUMP + NH4(+) + diphosphate. The protein operates within pyrimidine metabolism; dUMP biosynthesis; dUMP from dCTP: step 1/1. In terms of biological role, bifunctional enzyme that catalyzes both the deamination of dCTP to dUTP and the hydrolysis of dUTP to dUMP without releasing the toxic dUTP intermediate. This Mycolicibacterium vanbaalenii (strain DSM 7251 / JCM 13017 / BCRC 16820 / KCTC 9966 / NRRL B-24157 / PYR-1) (Mycobacterium vanbaalenii) protein is dCTP deaminase, dUMP-forming.